The sequence spans 154 residues: 6,7-dimethyl-8-ribityllumazine synthase (154 aa).

5-amino-6-(D-ribitylamino)uracil-binding positions include tryptophan 22, 56 to 58 (AWE), and 80 to 82 (CVV). 85-86 (DT) lines the (2S)-2-hydroxy-3-oxobutyl phosphate pocket. The active-site Proton donor is the histidine 88. Asparagine 113 contributes to the 5-amino-6-(D-ribitylamino)uracil binding site. Arginine 127 contacts (2S)-2-hydroxy-3-oxobutyl phosphate.

This sequence belongs to the DMRL synthase family. In terms of assembly, forms an icosahedral capsid composed of 60 subunits, arranged as a dodecamer of pentamers.

It carries out the reaction (2S)-2-hydroxy-3-oxobutyl phosphate + 5-amino-6-(D-ribitylamino)uracil = 6,7-dimethyl-8-(1-D-ribityl)lumazine + phosphate + 2 H2O + H(+). The protein operates within cofactor biosynthesis; riboflavin biosynthesis; riboflavin from 2-hydroxy-3-oxobutyl phosphate and 5-amino-6-(D-ribitylamino)uracil: step 1/2. In terms of biological role, catalyzes the formation of 6,7-dimethyl-8-ribityllumazine by condensation of 5-amino-6-(D-ribitylamino)uracil with 3,4-dihydroxy-2-butanone 4-phosphate. This is the penultimate step in the biosynthesis of riboflavin. The chain is 6,7-dimethyl-8-ribityllumazine synthase from Xylella fastidiosa (strain M23).